Consider the following 477-residue polypeptide: Ribulose bisphosphate carboxylase large chain (477 aa).

Residues 1 to 2 (MS) constitute a propeptide that is removed on maturation. The residue at position 3 (proline 3) is an N-acetylproline. Lysine 14 carries the N6,N6,N6-trimethyllysine modification. Asparagine 123 and threonine 173 together coordinate substrate. The active-site Proton acceptor is lysine 175. Lysine 177 is a binding site for substrate. Mg(2+) is bound by residues lysine 201, aspartate 203, and glutamate 204. Residue lysine 201 is modified to N6-carboxylysine. The Proton acceptor role is filled by histidine 294. Substrate-binding residues include arginine 295, histidine 327, and serine 379.

Belongs to the RuBisCO large chain family. Type I subfamily. Heterohexadecamer of 8 large chains and 8 small chains; disulfide-linked. The disulfide link is formed within the large subunit homodimers. Mg(2+) is required as a cofactor. The disulfide bond which can form in the large chain dimeric partners within the hexadecamer appears to be associated with oxidative stress and protein turnover.

The protein resides in the plastid. It is found in the chloroplast. The enzyme catalyses 2 (2R)-3-phosphoglycerate + 2 H(+) = D-ribulose 1,5-bisphosphate + CO2 + H2O. It carries out the reaction D-ribulose 1,5-bisphosphate + O2 = 2-phosphoglycolate + (2R)-3-phosphoglycerate + 2 H(+). Functionally, ruBisCO catalyzes two reactions: the carboxylation of D-ribulose 1,5-bisphosphate, the primary event in carbon dioxide fixation, as well as the oxidative fragmentation of the pentose substrate in the photorespiration process. Both reactions occur simultaneously and in competition at the same active site. The sequence is that of Ribulose bisphosphate carboxylase large chain from Hyophorbe lagenicaulis (Bottle palm).